The following is a 382-amino-acid chain: 1-deoxy-D-xylulose 5-phosphate reductoisomerase (382 aa).

Positions 10, 11, 12, 13, 36, and 122 each coordinate NADPH. Lys-123 serves as a coordination point for 1-deoxy-D-xylulose 5-phosphate. Glu-124 provides a ligand contact to NADPH. Asp-148 is a binding site for Mn(2+). Residues Ser-149, Glu-150, Ser-174, and His-197 each coordinate 1-deoxy-D-xylulose 5-phosphate. Glu-150 is a binding site for Mn(2+). Gly-203 contacts NADPH. Residues Ser-210, Asn-215, Lys-216, and Glu-219 each coordinate 1-deoxy-D-xylulose 5-phosphate. Glu-219 is a Mn(2+) binding site.

The protein belongs to the DXR family. Requires Mg(2+) as cofactor. It depends on Mn(2+) as a cofactor.

It catalyses the reaction 2-C-methyl-D-erythritol 4-phosphate + NADP(+) = 1-deoxy-D-xylulose 5-phosphate + NADPH + H(+). It functions in the pathway isoprenoid biosynthesis; isopentenyl diphosphate biosynthesis via DXP pathway; isopentenyl diphosphate from 1-deoxy-D-xylulose 5-phosphate: step 1/6. Catalyzes the NADPH-dependent rearrangement and reduction of 1-deoxy-D-xylulose-5-phosphate (DXP) to 2-C-methyl-D-erythritol 4-phosphate (MEP). In Pelodictyon phaeoclathratiforme (strain DSM 5477 / BU-1), this protein is 1-deoxy-D-xylulose 5-phosphate reductoisomerase.